The primary structure comprises 404 residues: Argininosuccinate synthase (404 aa).

ATP-binding positions include 13 to 21 and Ala-41; that span reads AYSGGLDTS. The L-citrulline site is built by Tyr-93 and Ser-98. An ATP-binding site is contributed by Gly-123. Residues Thr-125, Asn-129, and Asp-130 each contribute to the L-aspartate site. Position 129 (Asn-129) interacts with L-citrulline. Residues Arg-133, Ser-182, Ser-191, Glu-267, and Tyr-279 each coordinate L-citrulline.

This sequence belongs to the argininosuccinate synthase family. Type 1 subfamily. Homotetramer.

The protein localises to the cytoplasm. It catalyses the reaction L-citrulline + L-aspartate + ATP = 2-(N(omega)-L-arginino)succinate + AMP + diphosphate + H(+). It participates in amino-acid biosynthesis; L-arginine biosynthesis; L-arginine from L-ornithine and carbamoyl phosphate: step 2/3. The protein is Argininosuccinate synthase of Moritella profunda.